The primary structure comprises 59 residues: UPF0509 protein YciZ (59 aa).

Belongs to the UPF0509 family.

The sequence is that of UPF0509 protein YciZ from Salmonella agona (strain SL483).